Reading from the N-terminus, the 658-residue chain is Heat shock protein homolog SSE1 (658 aa).

Residues 614–627 show a composition bias toward basic and acidic residues; sequence KRKEEERKSKKENA. The disordered stretch occupies residues 614 to 658; sequence KRKEEERKSKKENAQEGTSSKPESKEESEAKEDNDEESDVASIDE. Over residues 642–658 the composition is skewed to acidic residues; the sequence is EAKEDNDEESDVASIDE.

This sequence belongs to the heat shock protein 70 family.

Its subcellular location is the cytoplasm. Required for normal growth at various temperatures. The chain is Heat shock protein homolog SSE1 (SSE1) from Encephalitozoon cuniculi (strain GB-M1) (Microsporidian parasite).